The chain runs to 342 residues: Glycerol-3-phosphate dehydrogenase [NAD(P)+] (342 aa).

Positions 13, 14, and 108 each coordinate NADPH. Sn-glycerol 3-phosphate is bound by residues lysine 108, glycine 139, and serine 141. Position 143 (alanine 143) interacts with NADPH. Sn-glycerol 3-phosphate is bound by residues lysine 194, aspartate 247, serine 257, arginine 258, and asparagine 259. Residue lysine 194 is the Proton acceptor of the active site. Arginine 258 provides a ligand contact to NADPH. Residues valine 282 and glutamate 284 each coordinate NADPH.

Belongs to the NAD-dependent glycerol-3-phosphate dehydrogenase family.

The protein localises to the cytoplasm. The catalysed reaction is sn-glycerol 3-phosphate + NAD(+) = dihydroxyacetone phosphate + NADH + H(+). The enzyme catalyses sn-glycerol 3-phosphate + NADP(+) = dihydroxyacetone phosphate + NADPH + H(+). It participates in membrane lipid metabolism; glycerophospholipid metabolism. Its function is as follows. Catalyzes the reduction of the glycolytic intermediate dihydroxyacetone phosphate (DHAP) to sn-glycerol 3-phosphate (G3P), the key precursor for phospholipid synthesis. In Lactococcus lactis subsp. cremoris (strain SK11), this protein is Glycerol-3-phosphate dehydrogenase [NAD(P)+].